Here is a 728-residue protein sequence, read N- to C-terminus: Catalase-peroxidase 2 (728 aa).

The tryptophyl-tyrosyl-methioninium (Trp-Tyr) (with M-240) cross-link spans 91-214; that stretch reads WHAAGTYRTG…LAAVQMGLIY (124 aa). Residue H92 is the Proton acceptor of the active site. The segment at residues 214-240 is a cross-link (tryptophyl-tyrosyl-methioninium (Tyr-Met) (with W-91)); it reads YVNPEGPNGNPDPAKAAVDIRETFARM. H255 provides a ligand contact to heme b. Residues 338–362 are disordered; sequence WKPNGDAGANSIPDPYDPSRRRGPT.

It belongs to the peroxidase family. Peroxidase/catalase subfamily. Homodimer or homotetramer. It depends on heme b as a cofactor. Formation of the three residue Trp-Tyr-Met cross-link is important for the catalase, but not the peroxidase activity of the enzyme.

The catalysed reaction is H2O2 + AH2 = A + 2 H2O. The enzyme catalyses 2 H2O2 = O2 + 2 H2O. Functionally, bifunctional enzyme with both catalase and broad-spectrum peroxidase activity. This Cupriavidus pinatubonensis (strain JMP 134 / LMG 1197) (Cupriavidus necator (strain JMP 134)) protein is Catalase-peroxidase 2.